The chain runs to 251 residues: MRKPIIAGNWKMHKTLKEALQFVEEVKHEVPSNEQVDAVVCAPALFLAHLVEATKGTNVKIGAQNMHFEDQGAFTGEISPVALKDLGVEYVIIGHSERREMFAETDETVNKKVLAAFKHGLVPIVCCGETLEERESNRTNEVVRVQVEKALEGLTEEQVKQVVIAYEPIWAIGTGKSSTAEDANNVCGYIRQVIANKFSQEAANAVRIQYGGSVKPENIAAFLAEEHIDGALVGGASLQPQSFLQLVEAGK.

Substrate is bound at residue 9–11 (NWK). The Electrophile role is filled by His-95. Glu-167 serves as the catalytic Proton acceptor. Substrate contacts are provided by residues Gly-173, Ser-213, and 234-235 (GG). Ser-213 carries the phosphoserine modification.

This sequence belongs to the triosephosphate isomerase family. Homodimer.

It localises to the cytoplasm. It catalyses the reaction D-glyceraldehyde 3-phosphate = dihydroxyacetone phosphate. The protein operates within carbohydrate biosynthesis; gluconeogenesis. Its pathway is carbohydrate degradation; glycolysis; D-glyceraldehyde 3-phosphate from glycerone phosphate: step 1/1. Functionally, involved in the gluconeogenesis. Catalyzes stereospecifically the conversion of dihydroxyacetone phosphate (DHAP) to D-glyceraldehyde-3-phosphate (G3P). This chain is Triosephosphate isomerase, found in Anoxybacillus flavithermus (strain DSM 21510 / WK1).